The chain runs to 502 residues: Probable cytosol aminopeptidase (502 aa).

2 residues coordinate Mn(2+): Lys-269 and Asp-274. Lys-281 is an active-site residue. Mn(2+)-binding residues include Asp-292, Asp-351, and Glu-353. Arg-355 is an active-site residue.

Belongs to the peptidase M17 family. Mn(2+) serves as cofactor.

The protein localises to the cytoplasm. The catalysed reaction is Release of an N-terminal amino acid, Xaa-|-Yaa-, in which Xaa is preferably Leu, but may be other amino acids including Pro although not Arg or Lys, and Yaa may be Pro. Amino acid amides and methyl esters are also readily hydrolyzed, but rates on arylamides are exceedingly low.. It catalyses the reaction Release of an N-terminal amino acid, preferentially leucine, but not glutamic or aspartic acids.. Functionally, presumably involved in the processing and regular turnover of intracellular proteins. Catalyzes the removal of unsubstituted N-terminal amino acids from various peptides. The polypeptide is Probable cytosol aminopeptidase (Photobacterium profundum (strain SS9)).